A 366-amino-acid chain; its full sequence is MPLTKYKAAAVTSEPCWFDLTAGVQKTIDFINEAGAAGCKLVAFPEVWIPGYPYWMWKVNYQQSLPLLKKYRENSLPIDSEEFRKIRRAARDNQIHVSLGFSEIDHATCYLTQTLIDPTGEVINHRRKIKPTHVEKLVYGDGAGDTFKSVTQTELGRLGQLNCWENMNPFLKALNVSEGEQIHIAAWPVYPGKETLNYPDPATNVAEPASDLVTPAYAIETGTWTLAPFQRLSKEGLKINTPEGIEPETDPSTYNGHARIYRPDGSLYAKPDKDFDGLMFVDIDLNECQLTKALADFSGHYMRPDLIRLLVDTRRKELVTEADPHGGITSYSTRQRLGLDVLLDSDVQKQKKSGASDLGATNALAY.

The region spanning 6–285 is the CN hydrolase domain; that stretch reads YKAAAVTSEP…DGLMFVDIDL (280 aa). Catalysis depends on Glu46, which acts as the Proton acceptor. Lys128 is a catalytic residue. Cys163 (nucleophile) is an active-site residue.

The protein belongs to the carbon-nitrogen hydrolase superfamily. Nitrilase family. In terms of assembly, oligomer of dimers, forming left-handed helical fibers.

The enzyme catalyses formamide = hydrogen cyanide + H2O. Functionally, catalyzes the hydration of cyanide to formamide. Degradation of cyanide may be important for plant pathogenic fungi in infection of cyanogenic plants. Can also transform some nitriles like 2-cyanopyridine and fumaronitrile. In Pyrenophora teres f. teres (strain 0-1) (Barley net blotch fungus), this protein is Cyanide hydratase.